Consider the following 282-residue polypeptide: Bifunctional protein FolD 1 (282 aa).

NADP(+) contacts are provided by residues 167-169 (GRS) and serine 192.

It belongs to the tetrahydrofolate dehydrogenase/cyclohydrolase family. As to quaternary structure, homodimer.

The enzyme catalyses (6R)-5,10-methylene-5,6,7,8-tetrahydrofolate + NADP(+) = (6R)-5,10-methenyltetrahydrofolate + NADPH. It catalyses the reaction (6R)-5,10-methenyltetrahydrofolate + H2O = (6R)-10-formyltetrahydrofolate + H(+). Its pathway is one-carbon metabolism; tetrahydrofolate interconversion. In terms of biological role, catalyzes the oxidation of 5,10-methylenetetrahydrofolate to 5,10-methenyltetrahydrofolate and then the hydrolysis of 5,10-methenyltetrahydrofolate to 10-formyltetrahydrofolate. The protein is Bifunctional protein FolD 1 of Colwellia psychrerythraea (strain 34H / ATCC BAA-681) (Vibrio psychroerythus).